The following is a 248-amino-acid chain: Inhibitor of growth protein 4 (248 aa).

A coiled-coil region spans residues 25 to 118 (FQLMRDLDQR…ADLKEKQIES (94 aa)). N6-acetyllysine is present on residues lysine 112, lysine 127, and lysine 129. Residues 115-160 (QIESSDYDSSSSKGKKSRTQKEKKAARARSKGKNSDEEAPKAAQKK) are disordered. The short motif at 127-147 (KGKKSRTQKEKKAARARSKGK) is the Bipartite nuclear localization signal element. Position 132 is a citrulline (arginine 132). 3 positions are modified to N6-acetyllysine: lysine 145, lysine 147, and lysine 155. The residue at position 165 (arginine 165) is a Citrulline. Residues 195-244 (PTYCLCHQVSYGEMIGCDNPDCSIERFHFACVGLTTKPRGKWFCPRCSQE) form a PHD-type zinc finger. 8 residues coordinate Zn(2+): cysteine 198, cysteine 200, cysteine 211, cysteine 216, histidine 222, cysteine 225, cysteine 238, and cysteine 241.

The protein belongs to the ING family. Homodimer. Component of the HBO1 complex composed of KAT7/HBO1, MEAF6, ING4 or ING5, and one scaffold subunit: complexes containing BRPF scaffold (BRPF1, BRD1/BRPF2 or BRPF3) direct KAT7/HBO1 specificity towards H3K14ac, while complexes containing JADE scaffold (JADE1, JADE2 and JADE3) mediate acetylation of histone H4. Interacts with H3K4me3 and to a lesser extent with H3K4me2, the interaction augments KAT7/HBO1 acetylation activity on H3 tails. Interacts with EP300, RELA and TP53; these interactions may be indirect. Interacts with EGLN1. Interacts with BCL2A1. Citrullination by PADI4 within the nuclear localization signal disrupts the interaction with p53 and increases susceptibility to degradation.

It is found in the nucleus. Functionally, component of HBO1 complexes, which specifically mediate acetylation of histone H3 at 'Lys-14' (H3K14ac), and have reduced activity toward histone H4. Through chromatin acetylation it may function in DNA replication. May inhibit tumor progression by modulating the transcriptional output of signaling pathways which regulate cell proliferation. Can suppress brain tumor angiogenesis through transcriptional repression of RELA/NFKB3 target genes when complexed with RELA. May also specifically suppress loss of contact inhibition elicited by activated oncogenes such as MYC. Represses hypoxia inducible factor's (HIF) activity by interacting with HIF prolyl hydroxylase 2 (EGLN1). Can enhance apoptosis induced by serum starvation in mammary epithelial cell line HC11. The sequence is that of Inhibitor of growth protein 4 (ING4) from Bos taurus (Bovine).